A 142-amino-acid polypeptide reads, in one-letter code: Pleckstrin homology-like domain family A member 2 (142 aa).

S3 is modified (phosphoserine). The 93-residue stretch at 7 to 99 folds into the PH domain; sequence VLREGELEKR…WNASITLALI (93 aa).

This sequence belongs to the PHLDA2 family.

The protein resides in the cytoplasm. The protein localises to the membrane. In terms of biological role, plays a role in regulating placenta growth. May act via its PH domain that competes with other PH domain-containing proteins, thereby preventing their binding to membrane lipids. This chain is Pleckstrin homology-like domain family A member 2 (PHLDA2), found in Bos taurus (Bovine).